We begin with the raw amino-acid sequence, 201 residues long: RILP-like protein 2 (201 aa).

Residues 14–108 enclose the RH1 domain; that stretch reads GPEIALDKDP…LKDGPQMGVG (95 aa). A coiled-coil region spans residues 67–155; the sequence is LEMLEALVNQ…AQDELQCYKS (89 aa). The 77-residue stretch at 121–197 folds into the RH2 domain; sequence RPRFTLQELR…TVKSLFSFKQ (77 aa). A disordered region spans residues 177-201; that stretch reads SPRENESKEKSTVKSLFSFKQGKQT. Over residues 179–188 the composition is skewed to basic and acidic residues; sequence RENESKEKST.

This sequence belongs to the RILPL family.

It localises to the cytoplasm. The protein localises to the cytosol. The protein resides in the cytoskeleton. It is found in the microtubule organizing center. Its subcellular location is the centrosome. It localises to the cell projection. The protein localises to the cilium. In terms of biological role, involved in cell shape and neuronal morphogenesis, positively regulating the establishment and maintenance of dendritic spines. Plays a role in cellular protein transport. The protein is RILP-like protein 2 (rilpl2) of Xenopus tropicalis (Western clawed frog).